Here is a 486-residue protein sequence, read N- to C-terminus: Palmitoyltransferase pfa5 (486 aa).

2 helical membrane passes run 12–32 (AVAR…CYVI) and 54–74 (VGAG…VIIT). Residues 94–130 (AADQQSTPAKRSKSRSRRKGHGHGHRKSKSDEVSDKP) form a disordered region. Basic residues predominate over residues 103–121 (KRSKSRSRRKGHGHGHRKS). Residues 172–222 (IYCSKCCHYKPDRTHHCREVDRCVRKMDHFCPWVGGVVSETSFKFFIQFVF) form the DHHC domain. Helical transmembrane passes span 217–237 (FIQF…VCAI) and 261–281 (LVML…FNLT). Disordered stretches follow at residues 326–357 (PVPP…STDP) and 433–486 (KDAA…TGTT). Residues 447–456 (SSYNSSPSAP) show a composition bias toward low complexity. A compositionally biased stretch (basic residues) spans 460–480 (RSKRKQKRGKHHHHHHHHRHS).

It belongs to the DHHC palmitoyltransferase family. PFA5 subfamily. Autopalmitoylated.

The protein resides in the membrane. The enzyme catalyses L-cysteinyl-[protein] + hexadecanoyl-CoA = S-hexadecanoyl-L-cysteinyl-[protein] + CoA. In Emericella nidulans (strain FGSC A4 / ATCC 38163 / CBS 112.46 / NRRL 194 / M139) (Aspergillus nidulans), this protein is Palmitoyltransferase pfa5 (pfa5).